A 432-amino-acid chain; its full sequence is Probable imidazolonepropionase (432 aa).

4-imidazolone-5-propanoate-binding residues include Tyr-159 and His-192. Position 159 (Tyr-159) interacts with N-formimidoyl-L-glutamate. His-260 serves as a coordination point for Fe(3+). His-260 is a Zn(2+) binding site. Glu-263 is a 4-imidazolone-5-propanoate binding site. Asp-334 is a Fe(3+) binding site. Asp-334 contributes to the Zn(2+) binding site. Asn-336 contacts N-formimidoyl-L-glutamate.

This sequence belongs to the metallo-dependent hydrolases superfamily. HutI family. Zn(2+) is required as a cofactor. Fe(3+) serves as cofactor.

It catalyses the reaction 4-imidazolone-5-propanoate + H2O = N-formimidoyl-L-glutamate. It functions in the pathway amino-acid degradation; L-histidine degradation into L-glutamate; N-formimidoyl-L-glutamate from L-histidine: step 3/3. In Xenopus tropicalis (Western clawed frog), this protein is Probable imidazolonepropionase (amdhd1).